A 602-amino-acid polypeptide reads, in one-letter code: Putative ankyrin repeat protein L100 (602 aa).

ANK repeat units follow at residues 133-162 (VLFY…SLIS), 269-294 (YLEK…KKSI), 295-324 (NKER…NINL), 325-354 (LKGT…DIHI), 355-384 (RDNA…DIHT), 386-414 (SSQA…DIRS), 416-444 (ENIL…DVLS), 445-474 (KGVE…DICA), 476-504 (DNEA…DVKA), 506-534 (DNEA…DITA), and 536-566 (NNEA…DVHA).

The protein is Putative ankyrin repeat protein L100 of Acanthamoeba polyphaga mimivirus (APMV).